The following is a 77-amino-acid chain: MTKLTVLLLAILVLLPLATSNSAADEALASLSGLLRRAKRCVPQNSCTSNADCCGSYTCSCVSQPSCKGMNPRRRCM.

Positions 1–21 (MTKLTVLLLAILVLLPLATSN) are cleaved as a signal peptide. A propeptide spanning residues 22–40 (SAADEALASLSGLLRRAKR) is cleaved from the precursor.

In terms of processing, contains 4 disulfide bonds. Expressed by the venom duct.

Its subcellular location is the secreted. The sequence is that of Teretoxin Tsu15.4 from Terebra subulata (Chocolate spotted auger).